The sequence spans 395 residues: Pyruvate synthase subunit PorA (395 aa).

Heterotetramer of one alpha, one beta, one delta and one gamma chain.

The enzyme catalyses 2 oxidized [2Fe-2S]-[ferredoxin] + pyruvate + CoA = 2 reduced [2Fe-2S]-[ferredoxin] + acetyl-CoA + CO2 + H(+). This Pyrococcus horikoshii (strain ATCC 700860 / DSM 12428 / JCM 9974 / NBRC 100139 / OT-3) protein is Pyruvate synthase subunit PorA (porA).